The sequence spans 75 residues: Putative defensin-like protein 126 (75 aa).

The N-terminal stretch at 1-24 is a signal peptide; it reads MSKSTFLFVYIILILGSMVNEIQG. Cystine bridges form between C29/C73, C38/C57, C43/C67, and C47/C69.

It belongs to the DEFL family.

The protein resides in the secreted. This chain is Putative defensin-like protein 126 (LCR6), found in Arabidopsis thaliana (Mouse-ear cress).